We begin with the raw amino-acid sequence, 37 residues long: U4-theraphotoxin-Hhn1v (37 aa).

Disulfide bonds link Cys-3–Cys-17, Cys-7–Cys-28, and Cys-22–Cys-33.

It belongs to the neurotoxin 12 (Hwtx-2) family. 02 (Hwtx-2) subfamily. As to expression, expressed by the venom gland.

It is found in the secreted. In terms of biological role, postsynaptic neurotoxin. The chain is U4-theraphotoxin-Hhn1v from Cyriopagopus hainanus (Chinese bird spider).